The sequence spans 304 residues: Sulfate adenylyltransferase subunit 2 1 (304 aa).

Belongs to the PAPS reductase family. CysD subfamily. Heterodimer composed of CysD, the smaller subunit, and CysN.

It carries out the reaction sulfate + ATP + H(+) = adenosine 5'-phosphosulfate + diphosphate. The protein operates within sulfur metabolism; hydrogen sulfide biosynthesis; sulfite from sulfate: step 1/3. With CysN forms the ATP sulfurylase (ATPS) that catalyzes the adenylation of sulfate producing adenosine 5'-phosphosulfate (APS) and diphosphate, the first enzymatic step in sulfur assimilation pathway. APS synthesis involves the formation of a high-energy phosphoric-sulfuric acid anhydride bond driven by GTP hydrolysis by CysN coupled to ATP hydrolysis by CysD. The protein is Sulfate adenylyltransferase subunit 2 1 of Marinobacter nauticus (strain ATCC 700491 / DSM 11845 / VT8) (Marinobacter aquaeolei).